The following is a 403-amino-acid chain: Rhomboid-like protein 15 (403 aa).

The next 5 membrane-spanning stretches (helical) occupy residues 22-42, 70-90, 103-123, 141-161, and 176-196; these read IPFL…ICLL, AIIF…LVPM, LLYL…LIAS, AIGF…LSGV, and LYPW…SLLG. Ser-145 functions as the Nucleophile in the catalytic mechanism. The Charge relay system role is filled by His-197. Residues 198-218 form a helical membrane-spanning segment; sequence LCGILSGFSYSYGLFNFLMPG. Residues 282-316 form a disordered region; it reads EASNQSSEDSRFPGRGRTLSTARDPTAPAGETDPN. The 41-residue stretch at 361–401 folds into the UBA domain; that stretch reads AASEEQIQKLVAMGFDRTQVEVALAAADDDLTVAVEILMSQ.

This sequence belongs to the peptidase S54 family.

It localises to the membrane. Functionally, probable rhomboid-type serine protease that catalyzes intramembrane proteolysis. May function in senescence. In Arabidopsis thaliana (Mouse-ear cress), this protein is Rhomboid-like protein 15.